The following is a 227-amino-acid chain: Flagellar L-ring protein 2 (227 aa).

Positions 1 to 17 are cleaved as a signal peptide; that stretch reads MKSKLAITMVSALLLAA. The N-palmitoyl cysteine moiety is linked to residue Cys-18. Residue Cys-18 is the site of S-diacylglycerol cysteine attachment.

Belongs to the FlgH family. As to quaternary structure, the basal body constitutes a major portion of the flagellar organelle and consists of four rings (L,P,S, and M) mounted on a central rod.

The protein localises to the cell outer membrane. Its subcellular location is the bacterial flagellum basal body. Assembles around the rod to form the L-ring and probably protects the motor/basal body from shearing forces during rotation. The protein is Flagellar L-ring protein 2 of Chromobacterium violaceum (strain ATCC 12472 / DSM 30191 / JCM 1249 / CCUG 213 / NBRC 12614 / NCIMB 9131 / NCTC 9757 / MK).